A 149-amino-acid polypeptide reads, in one-letter code: Transcriptional repressor NrdR (149 aa).

The segment at 3 to 34 (CPFCSIQETKVIDSRLVADGHQVRRRRECTMC) is a zinc-finger region. The ATP-cone domain maps to 49–139 (PRVVKRDGSR…VYRSFEDIRE (91 aa)).

The protein belongs to the NrdR family. Zn(2+) serves as cofactor.

In terms of biological role, negatively regulates transcription of bacterial ribonucleotide reductase nrd genes and operons by binding to NrdR-boxes. In Pseudoalteromonas atlantica (strain T6c / ATCC BAA-1087), this protein is Transcriptional repressor NrdR.